Here is a 277-residue protein sequence, read N- to C-terminus: Uridine-cytidine kinase 1 (277 aa).

24–32 contacts ATP; that stretch reads GGTASGKST. Substrate contacts are provided by Asp81, Tyr109, His114, Arg163, Arg172, and Gln180. Asp209 serves as a coordination point for ATP. The interval 241–277 is disordered; that stretch reads NHGRSLKRGVAEHGENPSGSSSNLTKRPLLEPSTRPH.

The protein belongs to the uridine kinase family.

The catalysed reaction is uridine + ATP = UMP + ADP + H(+). The enzyme catalyses cytidine + ATP = CMP + ADP + H(+). The protein operates within pyrimidine metabolism; CTP biosynthesis via salvage pathway; CTP from cytidine: step 1/3. It participates in pyrimidine metabolism; UMP biosynthesis via salvage pathway; UMP from uridine: step 1/1. Phosphorylates uridine and cytidine to uridine monophosphate and cytidine monophosphate. Does not phosphorylate deoxyribonucleosides or purine ribonucleosides. Can use ATP or GTP as a phosphate donor. The chain is Uridine-cytidine kinase 1 (uck1) from Danio rerio (Zebrafish).